The sequence spans 424 residues: Glutamyl-tRNA reductase (424 aa).

Substrate is bound by residues 49–52 (TCNR), serine 105, 110–112 (EPQ), and glutamine 116. The Nucleophile role is filled by cysteine 50. Residue 185–190 (GSGETA) participates in NADP(+) binding.

This sequence belongs to the glutamyl-tRNA reductase family. In terms of assembly, homodimer.

The enzyme catalyses (S)-4-amino-5-oxopentanoate + tRNA(Glu) + NADP(+) = L-glutamyl-tRNA(Glu) + NADPH + H(+). It participates in porphyrin-containing compound metabolism; protoporphyrin-IX biosynthesis; 5-aminolevulinate from L-glutamyl-tRNA(Glu): step 1/2. Its function is as follows. Catalyzes the NADPH-dependent reduction of glutamyl-tRNA(Glu) to glutamate 1-semialdehyde (GSA). The protein is Glutamyl-tRNA reductase of Legionella pneumophila (strain Corby).